Reading from the N-terminus, the 144-residue chain is Large ribosomal subunit protein uL15 (144 aa).

Positions 1 to 57 (MELNNIKPADGAKKDKRRVGRGIGSGLGKTAGRGHKGQKSRAGGFHKVGFEGGQMPM) are disordered. Gly residues predominate over residues 21–31 (RGIGSGLGKTA).

The protein belongs to the universal ribosomal protein uL15 family. In terms of assembly, part of the 50S ribosomal subunit.

Its function is as follows. Binds to the 23S rRNA. This Thiobacillus denitrificans (strain ATCC 25259 / T1) protein is Large ribosomal subunit protein uL15.